The sequence spans 513 residues: NAD(P)H-quinone oxidoreductase subunit 2, chloroplastic (513 aa).

14 consecutive transmembrane segments (helical) span residues 11–31 (NLIT…ILMI), 38–58 (SVWL…ILLF), 78–98 (GFTI…IPLS), 112–132 (FLIL…ANDL), 133–153 (VTIF…AGQA), 167–187 (LLMG…LYGL), 219–239 (FGAL…GFKI), 256–276 (PTPV…ALAT), 290–310 (WHIV…LIAA), 318–338 (MLAY…LVGN), 348–368 (YLLI…IFGL), 389–409 (AFAL…AGFF), 422–442 (HLYL…YYYL), and 478–498 (LGLT…NPLI).

This sequence belongs to the complex I subunit 2 family. In terms of assembly, NDH is composed of at least 16 different subunits, 5 of which are encoded in the nucleus.

The protein localises to the plastid. It is found in the chloroplast thylakoid membrane. The catalysed reaction is a plastoquinone + NADH + (n+1) H(+)(in) = a plastoquinol + NAD(+) + n H(+)(out). It catalyses the reaction a plastoquinone + NADPH + (n+1) H(+)(in) = a plastoquinol + NADP(+) + n H(+)(out). Functionally, NDH shuttles electrons from NAD(P)H:plastoquinone, via FMN and iron-sulfur (Fe-S) centers, to quinones in the photosynthetic chain and possibly in a chloroplast respiratory chain. The immediate electron acceptor for the enzyme in this species is believed to be plastoquinone. Couples the redox reaction to proton translocation, and thus conserves the redox energy in a proton gradient. In Staurastrum punctulatum (Green alga), this protein is NAD(P)H-quinone oxidoreductase subunit 2, chloroplastic.